A 239-amino-acid polypeptide reads, in one-letter code: Protein Thf1 (239 aa).

A coiled-coil region spans residues 183-219 (ERVKKDLELYRSNLDRLKQARAIVEEMVKAARRQQER). Residues 211–221 (KAARRQQERRQ) are compositionally biased toward basic and acidic residues. The tract at residues 211–239 (KAARRQQERRQSTASLPETPAADRRESSG) is disordered.

It belongs to the THF1 family.

Its function is as follows. May be involved in photosynthetic membrane biogenesis. The sequence is that of Protein Thf1 from Synechococcus sp. (strain JA-3-3Ab) (Cyanobacteria bacterium Yellowstone A-Prime).